The chain runs to 634 residues: CREB-regulated transcription coactivator 1 (634 aa).

Phosphoserine occurs at positions 64 and 113. Disordered stretches follow at residues 110–174 (RLGS…GSQD), 191–221 (TTSE…VPGI), 258–331 (LPTP…TLSP), and 357–479 (QAGS…HTST). Position 149 is a phosphothreonine (T149). Phosphoserine; by SIK1 and SIK2 is present on S151. The span at 151–174 (SDSALHQSTMTPTQPESFSSGSQD) shows a compositional bias: polar residues. T161 carries the post-translational modification Phosphothreonine. Residues 194-208 (EADKNLSKQAWDTKK) show a composition bias toward basic and acidic residues. Residues 242 to 258 (TGGSLPDLTNIHFPSPL) carry the Nuclear export signal motif. Polar residues-rich tracts occupy residues 271-283 (ALSS…NLAA), 296-305 (GMSTPGSSPQ), and 314-331 (LSLS…TLSP). Residues 362 to 397 (QPPPQPQPPPPPPPASQQPPPPPPPQAPVRLPPGGP) are compositionally biased toward pro residues. The span at 446–479 (QYRTSAGSPANQSPTSPVSNQGFSPGSSPQHTST) shows a compositional bias: polar residues.

Belongs to the TORC family. In terms of assembly, binds, as a tetramer, through its N-terminal region, with the bZIP domain of CREB1. 'Arg-314' in the bZIP domain of CREB1 is essential for this interaction. Interaction, via its C-terminal, with TAF4, enhances recruitment of TAF4 to CREB1. Interacts with 14-3-3 proteins, including YWHAE/14-3-3 epsilon. Interacts with calmodulin-dependent catalytic subunit PPP3CA/calcineurin A. As to quaternary structure, (Microbial infection) Interacts with HTLV1 Tax. Post-translationally, phosphorylation/dephosphorylation states of Ser-151 are required for regulating transduction of CREB activity. TORCs are inactive when phosphorylated, and active when dephosphorylated at this site. This primary site of phosphorylation is mediated by SIKs (SIK1 and SIK2), is regulated by cAMP and calcium levels and is dependent on the phosphorylation of SIKs by LKB1. Highly expressed in adult and fetal brain. Located to specific regions such as the prefrontal cortex and cerebellum. Very low expression in other tissues such as heart, spleen, lung, skeletal muscle, salivary gland, ovary and kidney.

It is found in the cytoplasm. The protein resides in the nucleus. Functionally, transcriptional coactivator for CREB1 which activates transcription through both consensus and variant cAMP response element (CRE) sites. Acts as a coactivator, in the SIK/TORC signaling pathway, being active when dephosphorylated and acts independently of CREB1 'Ser-133' phosphorylation. Enhances the interaction of CREB1 with TAF4. Regulates the expression of specific CREB-activated genes such as the steroidogenic gene, StAR. Potent coactivator of PGC1alpha and inducer of mitochondrial biogenesis in muscle cells. In the hippocampus, involved in late-phase long-term potentiation (L-LTP) maintenance at the Schaffer collateral-CA1 synapses. May be required for dendritic growth of developing cortical neurons. In concert with SIK1, regulates the light-induced entrainment of the circadian clock. In response to light stimulus, coactivates the CREB-mediated transcription of PER1 which plays an important role in the photic entrainment of the circadian clock. In terms of biological role, (Microbial infection) Plays a role of coactivator for TAX activation of the human T-cell leukemia virus type 1 (HTLV-1) long terminal repeats (LTR). This is CREB-regulated transcription coactivator 1 from Homo sapiens (Human).